Reading from the N-terminus, the 320-residue chain is Cytochrome f (320 aa).

The first 35 residues, Met-1–Ala-35, serve as a signal peptide directing secretion. Heme is bound by residues Tyr-36, Cys-56, Cys-59, and His-60. Residues Val-286 to Lys-306 traverse the membrane as a helical segment.

It belongs to the cytochrome f family. In terms of assembly, the 4 large subunits of the cytochrome b6-f complex are cytochrome b6, subunit IV (17 kDa polypeptide, petD), cytochrome f and the Rieske protein, while the 4 small subunits are PetG, PetL, PetM and PetN. The complex functions as a dimer. Heme serves as cofactor.

Its subcellular location is the plastid. The protein resides in the chloroplast thylakoid membrane. Functionally, component of the cytochrome b6-f complex, which mediates electron transfer between photosystem II (PSII) and photosystem I (PSI), cyclic electron flow around PSI, and state transitions. The polypeptide is Cytochrome f (Ceratophyllum demersum (Rigid hornwort)).